The primary structure comprises 747 residues: Plakophilin-1 (747 aa).

The interval 1-234 is required for binding to single stranded DNA; that stretch reads MNHSPLKTAL…SFGHSRASSK (234 aa). The segment at 1–286 is required for interaction with EIF4A1; the sequence is MNHSPLKTAL…ESAKQQVYQL (286 aa). Position 4 is a phosphoserine (S4). The interval 48–68 is disordered; the sequence is TVKRQKSKSSQSSTLSHSNRG. Phosphorylation in this region is required for cytoplasmic localization and protein stabilization regions lie at residues 54-69 and 116-191; these read SKSS…NRGS and RFSS…STCS. Phosphoserine; by PKB/AKT2 is present on S118. S119, S121, and S142 each carry phosphoserine. A required for WNT-mediated nuclear localization region spans residues 160 to 269; it reads YCDPRGTLRK…KYQAIGAYYI (110 aa). ARM repeat units follow at residues 243–274, 275–316, 317–359, 360–415, 416–463, 525–556, 557–603, 604–649, and 650–713; these read SGLT…HTCF, QDES…NLVF, RSTT…NLSS, TDEL…KRLG, MREL…NCVA, NYDC…LNLM, GKSK…IARL, LQSG…SHTG, and NTSN…DMWS.

This sequence belongs to the beta-catenin family. Part of a complex that contains DSG3, PKP1, YAP1 and YWHAG; the complex is required for localization of DSG3 and YAP1 to the cell membrane in keratinocytes. Interacts with DSP. Interacts (via N-terminus) with KRT5/CK5, KRT8/CK8 (via rod domain), KRT15/CK15 and KRT18/CK18 (via rod domain) as part of intermediate filaments. Interacts with VIM (via rod domain). Interacts with DSP. Interacts with DES. Interacts with FXR1; the interaction may facilitate the binding of PKP1 to PKP2, PKP3 and DSP mRNA. Interacts (via N-terminus) with EIF4A1; the interaction promotes EIF4A1 recruitment to the cap-dependent translation complex and EIF4A1 ATPase activity. Interacts with TJP1/ZO-1; the interaction facilitates TJP1/ZO-1 localization to the plasma membrane. Interacts (when phosphorylated) with YWHAG; the interaction results in translocation of PKP1 to the cytoplasm and loss of intercellular adhesion in keratinocytes. In terms of processing, phosphorylated by AKT2; required for interaction with YWHAG and subsequent localization away from desmosomes to the cytoplasm. Phosphorylation of Ser-118 by AKT2 promotes PKP1-driven cap-dependent mRNA translation and decreases intercellular adhesion, phosphorylation is promoted by insulin. Phosphorylation by RIPK4 at the N-terminus is required for its role in differentiation of keratinocytes and DSG1 localization at cell junctions. Expressed in stratified squamous, complex, glandular duct and bladder epithelia (at protein level). As to expression, widely expressed (at protein level).

It localises to the cell junction. Its subcellular location is the desmosome. It is found in the nucleus. The protein localises to the cytoplasm. The protein resides in the perinuclear region. It localises to the cell membrane. Its subcellular location is the stress granule. In terms of biological role, a component of desmosome cell-cell junctions which are required for positive regulation of cellular adhesion. Plays a role in desmosome protein expression regulation and localization to the desmosomal plaque, thereby maintaining cell sheet integrity and anchorage of desmosomes to intermediate filaments. Required for localization of DSG3 and YAP1 to the cell membrane in keratinocytes in response to mechanical strain, via the formation of an interaction complex composed of DSG3, YAP1, PKP1 and YWHAG. Positively regulates differentiation of keratinocytes, potentially via promoting localization of DSG1 at desmosome cell junctions. Required for calcium-independent development and maturation of desmosome plaques specifically at lateral cell-cell contacts in differentiating keratinocytes. Plays a role in the maintenance of DSG3 protein abundance, DSG3 clustering and localization of these clusters to the cell membrane in keratinocytes. May also promote keratinocyte proliferation and morphogenesis during postnatal development. Required for tight junction inside-out transepidermal barrier function of the skin. Promotes Wnt-mediated proliferation and differentiation of ameloblasts, via facilitating TJP1/ZO-1 localization to tight junctions. Binds single-stranded DNA (ssDNA), and may thereby play a role in sensing DNA damage and promoting cell survival. Positively regulates cap-dependent translation and as a result cell proliferation, via recruitment of EIF4A1 to the initiation complex and promotion of EIF4A1 ATPase activity. Regulates the mRNA stability and protein abundance of desmosome components PKP2, PKP3, DSC2 and DSP, potentially via its interaction with FXR1. In Homo sapiens (Human), this protein is Plakophilin-1 (PKP1).